The following is a 460-amino-acid chain: ATP synthase subunit beta 1 (460 aa).

An ATP-binding site is contributed by 149-156; the sequence is GGAGVGKT.

This sequence belongs to the ATPase alpha/beta chains family. As to quaternary structure, F-type ATPases have 2 components, CF(1) - the catalytic core - and CF(0) - the membrane proton channel. CF(1) has five subunits: alpha(3), beta(3), gamma(1), delta(1), epsilon(1). CF(0) has three main subunits: a(1), b(2) and c(9-12). The alpha and beta chains form an alternating ring which encloses part of the gamma chain. CF(1) is attached to CF(0) by a central stalk formed by the gamma and epsilon chains, while a peripheral stalk is formed by the delta and b chains.

It is found in the cell inner membrane. It carries out the reaction ATP + H2O + 4 H(+)(in) = ADP + phosphate + 5 H(+)(out). Its function is as follows. Produces ATP from ADP in the presence of a proton gradient across the membrane. The catalytic sites are hosted primarily by the beta subunits. The polypeptide is ATP synthase subunit beta 1 (Nitrosomonas eutropha (strain DSM 101675 / C91 / Nm57)).